Consider the following 471-residue polypeptide: Trehalose-binding lipoprotein LpqY (471 aa).

The first 28 residues, 1 to 28 (MDGRQVVRARRWCATAAVALMTASTVAA), serve as a signal peptide directing secretion. C29 carries the N-palmitoyl cysteine lipid modification. A lipid anchor (S-diacylglycerol cysteine) is attached at C29. Residues N45, E46, Q79, D100, N154, Y198, W279, Y281, G354, and R424 each contribute to the alpha,alpha-trehalose site. C57 and C375 are disulfide-bonded.

It belongs to the bacterial solute-binding protein 1 family. In terms of assembly, monomer. The complex is composed of two ATP-binding proteins (SugC), two transmembrane proteins (SugA and SugB) and a solute-binding protein (LpqY).

It localises to the cell inner membrane. Part of the ABC transporter complex LpqY-SugA-SugB-SugC, which is highly specific for uptake of trehalose. Involved in the recycling of extracellular trehalose released from trehalose-containing molecules synthesized by M.thermoresistibile. Trehalose uptake is essential for virulence. Binds deuterated trehalose with similar high affinity to trehalose, trehalose analogs including galactotrehalose, 4-azido-4-deoxy-trehalose, 6-azido-6-deoxy-trehalose, 3-azido-3-deoxy-trehalose and mannotrehalose in the order of decreasing affinity, respectively, and 2-azido-2-deoxy-trehalose and kojibiose (alpha1,2-glycosidic bond) with very low affinity. Does not recognize single glucose, 6-amino-6-deoxy-trehalose, trehalose-6-phosphate, nigerose (alpha1,3-glycosidic bond), maltose (alpha1,4-glycosidic bond), isomaltose (alpha1,6-glycosidic bond) or glycerophosphocholine. Decreased recognition of alpha,beta-trehalose and almost no recognition of beta,beta-trehalose. Substrate specificity indicates a strict requirement for an alpha1,1-linked disaccharide. The chain is Trehalose-binding lipoprotein LpqY from Mycolicibacterium thermoresistibile (strain ATCC 19527 / DSM 44167 / CIP 105390 / JCM 6362 / NCTC 10409 / 316) (Mycobacterium thermoresistibile).